A 497-amino-acid chain; its full sequence is Di-/tripeptide transporter (497 aa).

At 1–36 (MQNLNKTEKTFFGQPRGLLTLFQTEFWERFSYYGMR) the chain is on the cytoplasmic side. Residues 37 to 55 (AILVYYLYALTTADNAGLG) form a helical membrane-spanning segment. Residues 56-64 (LPKAQAMAI) are Extracellular-facing. The helical transmembrane segment at 65–83 (VSIYGALVYLSTIVGGWVA) threads the bilayer. Residues 84–92 (DRLLGASRT) are Cytoplasmic-facing. The chain crosses the membrane as a helical span at residues 93 to 111 (IFLGGILITLGHIALATPF). Residues 112–115 (GLSS) are Extracellular-facing. Residues 116 to 134 (LFVALFLIILGTGMLKPNI) form a helical membrane-spanning segment. The Cytoplasmic segment spans residues 135–154 (SNMVGHLYSKDDSRRDTGFN). Residues 155-173 (IFVVGINMGSLIAPLIVGT) traverse the membrane as a helical segment. The Extracellular portion of the chain corresponds to 174-181 (VGQGVNYH). A helical transmembrane segment spans residues 182 to 200 (LGFSLAAIGMIFALFAYWY). The Cytoplasmic portion of the chain corresponds to 201–224 (GRLRHFPEIGREPSNPMDSKARRN). Residues 225–243 (FLITLTIVVIVAIIGFFLL) traverse the membrane as a helical segment. Topologically, residues 244 to 254 (YQASPANFINN) are extracellular. The helical transmembrane segment at 255–273 (FINVLSIIGIVVPIIYFVM) threads the bilayer. At 274–293 (MFTSKKVESDERRKLTAYIP) the chain is on the cytoplasmic side. A helical membrane pass occupies residues 294 to 312 (LFLSAIVFWAIEEQSSTII). The Extracellular segment spans residues 313 to 335 (AVWGESRSNLDPTWFGITFHIDP). A helical transmembrane segment spans residues 336–354 (SWYQLLNPLFIVLLSPIFV). Topologically, residues 355-372 (RLWNKLGERQPSTIVKFG) are cytoplasmic. The chain crosses the membrane as a helical span at residues 373–391 (LGLMLTGISYLIMTLPGLL). Over 392 to 425 (NGTSGRASALWLVLMFAVQMAGELLVSPVGLSVS) the chain is Extracellular. A helical transmembrane segment spans residues 426 to 444 (TKLAPVAFQSQMMAMWFLA). Residues 445 to 497 (DSTSQAINAQITPLFKAATEVHFFAITGIIGIIVGIILLIVKKPILKLMGDVR) lie on the Cytoplasmic side of the membrane.

It belongs to the major facilitator superfamily. Proton-dependent oligopeptide transporter (POT/PTR) (TC 2.A.17) family.

The protein localises to the cell membrane. Proton-dependent uptake of di- or tri-peptides. The polypeptide is Di-/tripeptide transporter (dtpT) (Lactococcus lactis subsp. lactis (strain IL1403) (Streptococcus lactis)).